Reading from the N-terminus, the 191-residue chain is Shikimate kinase (191 aa).

ATP is bound at residue 24-29 (GSGKTS). A Mg(2+)-binding site is contributed by Thr28. Substrate is bound by residues Asp46, Arg70, and Gly92. Arg130 serves as a coordination point for ATP. Residue Arg149 participates in substrate binding.

This sequence belongs to the shikimate kinase family. As to quaternary structure, monomer. Requires Mg(2+) as cofactor.

Its subcellular location is the cytoplasm. The enzyme catalyses shikimate + ATP = 3-phosphoshikimate + ADP + H(+). It functions in the pathway metabolic intermediate biosynthesis; chorismate biosynthesis; chorismate from D-erythrose 4-phosphate and phosphoenolpyruvate: step 5/7. In terms of biological role, catalyzes the specific phosphorylation of the 3-hydroxyl group of shikimic acid using ATP as a cosubstrate. The polypeptide is Shikimate kinase (Parasynechococcus marenigrum (strain WH8102)).